The following is a 186-amino-acid chain: Elongation factor P (186 aa).

It belongs to the elongation factor P family.

It is found in the cytoplasm. It functions in the pathway protein biosynthesis; polypeptide chain elongation. Functionally, involved in peptide bond synthesis. Stimulates efficient translation and peptide-bond synthesis on native or reconstituted 70S ribosomes in vitro. Probably functions indirectly by altering the affinity of the ribosome for aminoacyl-tRNA, thus increasing their reactivity as acceptors for peptidyl transferase. The sequence is that of Elongation factor P from Crocosphaera subtropica (strain ATCC 51142 / BH68) (Cyanothece sp. (strain ATCC 51142)).